The chain runs to 205 residues: Large ribosomal subunit protein uL4 (205 aa).

The segment at 65 to 99 is disordered; the sequence is RQKGTGGARHGSRKSPTFRHGGVYKGPTPRSHGHD.

It belongs to the universal ribosomal protein uL4 family. As to quaternary structure, part of the 50S ribosomal subunit.

In terms of biological role, one of the primary rRNA binding proteins, this protein initially binds near the 5'-end of the 23S rRNA. It is important during the early stages of 50S assembly. It makes multiple contacts with different domains of the 23S rRNA in the assembled 50S subunit and ribosome. Forms part of the polypeptide exit tunnel. In Ruegeria pomeroyi (strain ATCC 700808 / DSM 15171 / DSS-3) (Silicibacter pomeroyi), this protein is Large ribosomal subunit protein uL4.